The following is a 137-amino-acid chain: Nucleoside diphosphate kinase (137 aa).

Residues K10, F58, R86, T92, R103, and N113 each contribute to the ATP site. Residue H116 is the Pros-phosphohistidine intermediate of the active site.

This sequence belongs to the NDK family. In terms of assembly, homotetramer. Mg(2+) is required as a cofactor.

The protein localises to the cytoplasm. It catalyses the reaction a 2'-deoxyribonucleoside 5'-diphosphate + ATP = a 2'-deoxyribonucleoside 5'-triphosphate + ADP. It carries out the reaction a ribonucleoside 5'-diphosphate + ATP = a ribonucleoside 5'-triphosphate + ADP. In terms of biological role, major role in the synthesis of nucleoside triphosphates other than ATP. The ATP gamma phosphate is transferred to the NDP beta phosphate via a ping-pong mechanism, using a phosphorylated active-site intermediate. This chain is Nucleoside diphosphate kinase, found in Helicobacter acinonychis (strain Sheeba).